The chain runs to 299 residues: Non-homologous end-joining factor 1 (299 aa).

The segment at 1–135 (MEELEQGLLM…ASPSLVSQHL (135 aa)) is globular head. Residues 128–170 (PSLVSQHLIRPLMGMSLALQCQVRELATLLHMKDLEIQDYQES) adopt a coiled-coil conformation. Phosphoserine; by PRKDC occurs at positions 132, 203, 245, and 251. A C-terminal tail region spans residues 224 to 288 (QEVQVGQKHQ…GPLQRPQLSK (65 aa)). Positions 255–266 (NQPEQLVSSAPT) are enriched in polar residues. The interval 255 to 299 (NQPEQLVSSAPTLSAPEKESTGTSGPLQRPQLSKVKRKKPRGLFS) is disordered. Residue S263 is modified to Phosphoserine. T266 carries the post-translational modification Phosphothreonine. Phosphoserine is present on S287. Residues 288 to 299 (KVKRKKPRGLFS) show a composition bias toward basic residues. Positions 289 to 299 (VKRKKPRGLFS) match the XLM motif.

This sequence belongs to the XRCC4-XLF family. XLF subfamily. In terms of assembly, homodimer; mainly exists as a homodimer when not associated with XRCC4. Interacts with XRCC4; the interaction is direct and is mediated via a head-to-head interaction between N-terminal head regions. Component of the core long-range non-homologous end joining (NHEJ) complex (also named DNA-PK complex) composed of PRKDC, LIG4, XRCC4, XRCC6/Ku70, XRCC5/Ku86 and NHEJ1/XLF. Additional component of the NHEJ complex includes PAXX. Following autophosphorylation, PRKDC dissociates from DNA, leading to formation of the short-range NHEJ complex, composed of LIG4, XRCC4, XRCC6/Ku70, XRCC5/Ku86 and NHEJ1/XLF. Interacts with POLL (DNA polymerase lambda); promoting POLL recruitment to double-strand breaks (DSBs) and stimulation of the end-filling activity of POLL. Post-translationally, phosphorylated by PRKDC at the C-terminus in response to DNA damage. Phosphorylations by PRKDC at the C-terminus of XRCC4 and NHEJ1/XLF are highly redundant and regulate ability of the XRCC4-NHEJ1/XLF subcomplex to bridge DNA. Phosphorylation does not prevent interaction with XRCC4 but disrupts ability to bridge DNA and promotes detachment from DNA. As to expression, ubiquitously expressed.

It is found in the nucleus. The protein localises to the chromosome. Its function is as follows. DNA repair protein involved in DNA non-homologous end joining (NHEJ); it is required for double-strand break (DSB) repair and V(D)J recombination and is also involved in telomere maintenance. Plays a key role in NHEJ by promoting the ligation of various mismatched and non-cohesive ends. Together with PAXX, collaborates with DNA polymerase lambda (POLL) to promote joining of non-cohesive DNA ends. May act in concert with XRCC5-XRCC6 (Ku) to stimulate XRCC4-mediated joining of blunt ends and several types of mismatched ends that are non-complementary or partially complementary. In some studies, has been shown to associate with XRCC4 to form alternating helical filaments that bridge DNA and act like a bandage, holding together the broken DNA until it is repaired. Alternatively, it has also been shown that rather than forming filaments, a single NHEJ1 dimer interacts through both head domains with XRCC4 to promote the close alignment of DNA ends. The XRCC4-NHEJ1/XLF subcomplex binds to the DNA fragments of a DSB in a highly diffusive manner and robustly bridges two independent DNA molecules, holding the broken DNA fragments in close proximity to one other. The mobility of the bridges ensures that the ends remain accessible for further processing by other repair factors. Binds DNA in a length-dependent manner. In Homo sapiens (Human), this protein is Non-homologous end-joining factor 1.